Reading from the N-terminus, the 266-residue chain is Ribonuclease 3 (266 aa).

The 125-residue stretch at 34–158 folds into the RNase III domain; sequence IERCQEILGY…VIAALYIDGG (125 aa). Residue E72 coordinates Mg(2+). The active site involves D76. 2 residues coordinate Mg(2+): D144 and E147. E147 is an active-site residue. In terms of domain architecture, DRBM spans 185 to 254; the sequence is NHKSVLQQFA…AANALAELHN (70 aa).

This sequence belongs to the ribonuclease III family. In terms of assembly, homodimer. It depends on Mg(2+) as a cofactor.

It is found in the cytoplasm. It carries out the reaction Endonucleolytic cleavage to 5'-phosphomonoester.. Its function is as follows. Digests double-stranded RNA. Involved in the processing of primary rRNA transcript to yield the immediate precursors to the large and small rRNAs (23S and 16S). Processes some mRNAs, and tRNAs when they are encoded in the rRNA operon. Processes pre-crRNA and tracrRNA of type II CRISPR loci if present in the organism. This Rhodopirellula baltica (strain DSM 10527 / NCIMB 13988 / SH1) protein is Ribonuclease 3.